Consider the following 756-residue polypeptide: 5-methyltetrahydropteroyltriglutamate--homocysteine methyltransferase (756 aa).

Residues 16-19 (RELK) and Lys116 contribute to the 5-methyltetrahydropteroyltri-L-glutamate site. Residues 433-435 (IGS) and Glu486 each bind L-homocysteine. Residues 433 to 435 (IGS) and Glu486 contribute to the L-methionine site. Residues 517 to 518 (RC) and Trp563 contribute to the 5-methyltetrahydropteroyltri-L-glutamate site. Asp601 contributes to the L-homocysteine binding site. Residue Asp601 participates in L-methionine binding. Glu607 is a 5-methyltetrahydropteroyltri-L-glutamate binding site. Zn(2+) contacts are provided by His643, Cys645, and Glu667. His696 (proton donor) is an active-site residue. Cys728 contributes to the Zn(2+) binding site.

Belongs to the vitamin-B12 independent methionine synthase family. The cofactor is Zn(2+).

The enzyme catalyses 5-methyltetrahydropteroyltri-L-glutamate + L-homocysteine = tetrahydropteroyltri-L-glutamate + L-methionine. It functions in the pathway amino-acid biosynthesis; L-methionine biosynthesis via de novo pathway; L-methionine from L-homocysteine (MetE route): step 1/1. Functionally, catalyzes the transfer of a methyl group from 5-methyltetrahydrofolate to homocysteine resulting in methionine formation. The polypeptide is 5-methyltetrahydropteroyltriglutamate--homocysteine methyltransferase (Buchnera aphidicola subsp. Baizongia pistaciae (strain Bp)).